Here is a 318-residue protein sequence, read N- to C-terminus: C1GALT1-specific chaperone 1 (318 aa).

Topologically, residues 1–6 (MLSESS) are cytoplasmic. Residues 7 to 26 (SFLKGVMLGSIFCALITMLG) traverse the membrane as a helical; Signal-anchor for type II membrane protein segment. Topologically, residues 27–318 (HIRIGHGSRM…FLPPNGSDND (292 aa)) are lumenal.

The protein belongs to the glycosyltransferase 31 family. Beta3-Gal-T subfamily. As to quaternary structure, associates with core 1 beta-3-galactosyltransferase (C1GALT1), probably not with the soluble active form.

It is found in the membrane. In terms of biological role, probable chaperone required for the generation of 1 O-glycan Gal-beta1-3GalNAc-alpha1-Ser/Thr (T antigen), which is a precursor for many extended O-glycans in glycoproteins. Probably acts as a specific molecular chaperone assisting the folding/stability of core 1 beta-3-galactosyltransferase (C1GALT1). The sequence is that of C1GALT1-specific chaperone 1 (C1GALT1C1) from Bos taurus (Bovine).